A 689-amino-acid chain; its full sequence is Glycine--tRNA ligase beta subunit (689 aa).

This sequence belongs to the class-II aminoacyl-tRNA synthetase family. As to quaternary structure, tetramer of two alpha and two beta subunits.

It localises to the cytoplasm. It carries out the reaction tRNA(Gly) + glycine + ATP = glycyl-tRNA(Gly) + AMP + diphosphate. This Shewanella baltica (strain OS223) protein is Glycine--tRNA ligase beta subunit.